Consider the following 224-residue polypeptide: uncharacterized protein (224 aa).

Residues 21-41 (LTVILIIPIVYLGVCGCFEIV) traverse the membrane as a helical segment.

Its subcellular location is the membrane. This is an uncharacterized protein from Methanocaldococcus jannaschii (strain ATCC 43067 / DSM 2661 / JAL-1 / JCM 10045 / NBRC 100440) (Methanococcus jannaschii).